Reading from the N-terminus, the 569-residue chain is Urease subunit alpha (569 aa).

A Urease domain is found at 131-569 (GGIDAHIHFI…VPMAQRYFLF (439 aa)). Positions 136, 138, and 219 each coordinate Ni(2+). Lys219 is modified (N6-carboxylysine). His221 provides a ligand contact to substrate. The Ni(2+) site is built by His248 and His274. The Proton donor role is filled by His322. Asp362 provides a ligand contact to Ni(2+).

This sequence belongs to the metallo-dependent hydrolases superfamily. Urease alpha subunit family. Heterotrimer of UreA (gamma), UreB (beta) and UreC (alpha) subunits. Three heterotrimers associate to form the active enzyme. Ni cation is required as a cofactor. Post-translationally, carboxylation allows a single lysine to coordinate two nickel ions.

Its subcellular location is the cytoplasm. It carries out the reaction urea + 2 H2O + H(+) = hydrogencarbonate + 2 NH4(+). It participates in nitrogen metabolism; urea degradation; CO(2) and NH(3) from urea (urease route): step 1/1. This chain is Urease subunit alpha, found in Bacillus sp. (strain TB-90).